The primary structure comprises 124 residues: Holo-[acyl-carrier-protein] synthase (124 aa).

Positions 7 and 55 each coordinate Mg(2+).

It belongs to the P-Pant transferase superfamily. AcpS family. Mg(2+) is required as a cofactor.

The protein resides in the cytoplasm. The catalysed reaction is apo-[ACP] + CoA = holo-[ACP] + adenosine 3',5'-bisphosphate + H(+). Transfers the 4'-phosphopantetheine moiety from coenzyme A to a Ser of acyl-carrier-protein. The sequence is that of Holo-[acyl-carrier-protein] synthase from Borreliella afzelii (strain PKo) (Borrelia afzelii).